The following is a 436-amino-acid chain: Chromosomal replication initiator protein DnaA (436 aa).

The domain I, interacts with DnaA modulators stretch occupies residues Met1–Lys69. The segment at Lys69–Ser99 is domain II. Positions Ile100–Ala314 are domain III, AAA+ region. Residues Gly144, Gly146, Lys147, and Thr148 each contribute to the ATP site. The domain IV, binds dsDNA stretch occupies residues Ser315–Gly436.

It belongs to the DnaA family. Oligomerizes as a right-handed, spiral filament on DNA at oriC.

The protein localises to the cytoplasm. Functionally, plays an essential role in the initiation and regulation of chromosomal replication. ATP-DnaA binds to the origin of replication (oriC) to initiate formation of the DNA replication initiation complex once per cell cycle. Binds the DnaA box (a 9 base pair repeat at the origin) and separates the double-stranded (ds)DNA. Forms a right-handed helical filament on oriC DNA; dsDNA binds to the exterior of the filament while single-stranded (ss)DNA is stabiized in the filament's interior. The ATP-DnaA-oriC complex binds and stabilizes one strand of the AT-rich DNA unwinding element (DUE), permitting loading of DNA polymerase. After initiation quickly degrades to an ADP-DnaA complex that is not apt for DNA replication. Binds acidic phospholipids. In Campylobacter concisus (strain 13826), this protein is Chromosomal replication initiator protein DnaA.